Reading from the N-terminus, the 21-residue chain is Protein YmjD (21 aa).

This Escherichia coli (strain K12) protein is Protein YmjD (ymjD).